Reading from the N-terminus, the 493-residue chain is Cytochrome P450 2W1 (493 aa).

The first 23 residues, 1-23, serve as a signal peptide directing secretion; sequence MALLLLGVWGILLLLGLWGLLQG. N-linked (GlcNAc...) asparagine glycosylation occurs at Asn-180. Residue Cys-436 coordinates heme.

The protein belongs to the cytochrome P450 family. Heme is required as a cofactor. In terms of tissue distribution, detected in colon, ileum, and testes.

The protein resides in the endoplasmic reticulum lumen. It localises to the cell membrane. It is found in the microsome membrane. It catalyses the reaction all-trans-retinoate + reduced [NADPH--hemoprotein reductase] + O2 = all-trans-4-hydroxyretinoate + oxidized [NADPH--hemoprotein reductase] + H2O + H(+). It carries out the reaction 1-(9Z-octadecenoyl)-sn-glycero-3-phosphocholine + reduced [NADPH--hemoprotein reductase] + O2 = 1-[8-hydroxy-(9Z)-octadecenoyl]-sn-glycero-3-phosphocholine + oxidized [NADPH--hemoprotein reductase] + H2O + H(+). The catalysed reaction is 1-(9Z-octadecenoyl)-sn-glycero-3-phosphocholine + reduced [NADPH--hemoprotein reductase] + O2 = 1-[11-hydroxy-(9Z)-octadecenoyl]-sn-glycero-3-phosphocholine + oxidized [NADPH--hemoprotein reductase] + H2O + H(+). The enzyme catalyses 1-(9Z-octadecenoyl)-sn-glycero-3-phosphocholine + reduced [NADPH--hemoprotein reductase] + O2 = 1-[(9S,10R)-epoxy-octadecanoyl]-sn-glycero-3-phosphocholine + oxidized [NADPH--hemoprotein reductase] + H2O + H(+). It catalyses the reaction 1-(9Z-octadecenoyl)-sn-glycero-3-phosphocholine + reduced [NADPH--hemoprotein reductase] + O2 = 1-[(9R,10S)-epoxy-octadecanoyl]-sn-glycero-3-phosphocholine + oxidized [NADPH--hemoprotein reductase] + H2O + H(+). In terms of biological role, a cytochrome P450 monooxygenase that may play a role in retinoid and phospholipid metabolism. Catalyzes the hydroxylation of saturated carbon hydrogen bonds. Hydroxylates all trans-retinoic acid (atRA) to 4-hydroxyretinoate and may regulate atRA clearance. Other retinoids such as all-trans retinol and all-trans retinal are potential endogenous substrates. Catalyzes both epoxidation of double bonds and hydroxylation of carbon hydrogen bonds of the fatty acyl chain of 1-acylphospholipids/2-lysophospholipids. Can metabolize various lysophospholipids classes including lysophosphatidylcholines (LPCs), lysophosphatidylinositols (LPIs), lysophosphatidylserines (LPSs), lysophosphatidylglycerols (LPGs), lysophosphatidylethanolamines (LPEs) and lysophosphatidic acids (LPAs). Has low or no activity toward 2-acylphospholipids/1-lysophospholipids, diacylphospholipids and free fatty acids. May play a role in tumorigenesis by activating procarcinogens such as aflatoxin B1, polycyclic aromatic hydrocarbon dihydrodiols and aromatic amines. Mechanistically, uses molecular oxygen inserting one oxygen atom into a substrate, and reducing the second into a water molecule, with two electrons provided by NADPH via cytochrome P450 reductase (CPR; NADPH-ferrihemoprotein reductase). The polypeptide is Cytochrome P450 2W1 (Cyp2w1) (Mus musculus (Mouse)).